The chain runs to 961 residues: Glycine dehydrogenase (decarboxylating) (961 aa).

Position 709 is an N6-(pyridoxal phosphate)lysine (lysine 709).

Belongs to the GcvP family. As to quaternary structure, the glycine cleavage system is composed of four proteins: P, T, L and H. Pyridoxal 5'-phosphate serves as cofactor.

It catalyses the reaction N(6)-[(R)-lipoyl]-L-lysyl-[glycine-cleavage complex H protein] + glycine + H(+) = N(6)-[(R)-S(8)-aminomethyldihydrolipoyl]-L-lysyl-[glycine-cleavage complex H protein] + CO2. Its function is as follows. The glycine cleavage system catalyzes the degradation of glycine. The P protein binds the alpha-amino group of glycine through its pyridoxal phosphate cofactor; CO(2) is released and the remaining methylamine moiety is then transferred to the lipoamide cofactor of the H protein. The protein is Glycine dehydrogenase (decarboxylating) of Streptomyces griseus subsp. griseus (strain JCM 4626 / CBS 651.72 / NBRC 13350 / KCC S-0626 / ISP 5235).